Reading from the N-terminus, the 96-residue chain is Co-chaperonin GroES (96 aa).

It belongs to the GroES chaperonin family. Heptamer of 7 subunits arranged in a ring. Interacts with the chaperonin GroEL.

It localises to the cytoplasm. In terms of biological role, together with the chaperonin GroEL, plays an essential role in assisting protein folding. The GroEL-GroES system forms a nano-cage that allows encapsulation of the non-native substrate proteins and provides a physical environment optimized to promote and accelerate protein folding. GroES binds to the apical surface of the GroEL ring, thereby capping the opening of the GroEL channel. This is Co-chaperonin GroES from Thioalkalivibrio sulfidiphilus (strain HL-EbGR7).